The primary structure comprises 69 residues: DNA gyrase inhibitor YacG (69 aa).

Residues 1–15 (MSDEPEHTAKVEPLR) show a composition bias toward basic and acidic residues. Residues 1–22 (MSDEPEHTAKVEPLRKPLPCPE) form a disordered region. Residues Cys20, Cys23, Cys35, and Cys39 each coordinate Zn(2+).

This sequence belongs to the DNA gyrase inhibitor YacG family. In terms of assembly, interacts with GyrB. It depends on Zn(2+) as a cofactor.

In terms of biological role, inhibits all the catalytic activities of DNA gyrase by preventing its interaction with DNA. Acts by binding directly to the C-terminal domain of GyrB, which probably disrupts DNA binding by the gyrase. The sequence is that of DNA gyrase inhibitor YacG from Allorhizobium ampelinum (strain ATCC BAA-846 / DSM 112012 / S4) (Agrobacterium vitis (strain S4)).